The primary structure comprises 315 residues: MPGLSCRFYQHKFPEVEDVVMVNVRSIAEMGAYVSLLEYNNIEGMILLSELSRRRIRSINKLIRIGRNECVVVIRVDKEKGYIDLSKRRVSPEEAIKCEDKFTKSKTVYSILRHVAEVLEYTKDEQLESLFQRTAWVFDDKYKRPGYGAYDAFKHAVSDPSILDSLDLNEDEREVLINNINRRLTPQAVKIRADIEVACYGYEGIDAVKEALRAGLNCSTETMPIKINLIAPPRYVMTTTTLERTEGLSVLNQAMAVIKEKIEEKRGVFNVQMEPKVVTDTDETELARQLERLERENAEVDGDDDAEEMEAKAED.

One can recognise an S1 motif domain in the interval 17 to 88; the sequence is EDVVMVNVRS…EKGYIDLSKR (72 aa). Ser-49 is subject to Phosphoserine; by HRI. At Ser-52 the chain carries Phosphoserine. Lys-141 carries the post-translational modification N6-acetyllysine. Ser-158 is subject to Phosphoserine. A phosphothreonine mark is found at Thr-279 and Thr-281. The segment at 292–315 is disordered; the sequence is RLERENAEVDGDDDAEEMEAKAED. The span at 299–308 shows a compositional bias: acidic residues; that stretch reads EVDGDDDAEE.

It belongs to the eIF-2-alpha family. In terms of assembly, eukaryotic translation initiation factor 2 eIF2 is a heterotrimeric complex composed of an alpha (EIF2S1), a beta (EIF2S2) and a gamma (EIF2S3) chain. eIF2 is member of the 43S pre-initiation complex (43S PIC). eIF2 forms a complex with at least CELF1/CUGBP1, CALR, CALR3, EIF2S1, EIF2S2, HSP90B1 and HSPA5. Interaction with METAP2 protects EIF2S1 from inhibitory phosphorylation. Interacts with ABCF1. Associates with ribosomes. Interacts with DDX3X in an RNA-independent manner. Phosphorylation at Ser-49 and Ser-52 stabilizes the eIF-2/GDP/eIF2B complex and prevents GDP/GTP exchange reaction, thus impairing the recycling of eIF-2 between successive rounds of initiation and leading to global inhibition of translation, while concomitantly initiating the preferential translation of integrated stress response (ISR)-specific mRNAs. Substrate for at least 4 kinases: EIF2AK1/HRI, EIF2AK2/PKR, EIF2AK3/PERK and EIF2AK4/GCN2. Phosphorylation at Ser-52 by the EIF2AK3/PERK protein kinase occurs in response to the unfolded protein response. Phosphorylation on Ser-52 by the EIF2AK4/GCN2 protein kinase occurs in response to amino acid starvation and UV irradiation. Phosphorylation at Ser-52 by EIF2AK1/HRI in response to mitochondrial damage promotes relocalization to the mitochondrial surface.

The protein localises to the cytoplasm. Its subcellular location is the stress granule. It localises to the cytosol. The protein resides in the mitochondrion. Activity is regulated by phosphorylation at Ser-49 and Ser-52, which stabilizes the eIF2/GDP/eIF2B complex and prevents the eIF2B-mediated exchange of GDP for GTP, thereby preventing the formation of the 43S pre-initiation complex (43S PIC). This results in the global attenuation of 5' cap-dependent protein synthesis and concomitant translation of ISR-specific mRNAs that contain a short upstream open reading frame (uORF) in their 5' UTR, such as ATF4, ATF5, DDIT3/CHOP and PPP1R15A/GADD34. Member of the eIF2 complex that functions in the early steps of protein synthesis by forming a ternary complex with GTP and initiator tRNA. This complex binds to a 40S ribosomal subunit, followed by mRNA binding to form a 43S pre-initiation complex. Junction of the 60S ribosomal subunit to form the 80S initiation complex is preceded by hydrolysis of the GTP bound to eIF2 and release of an eIF2-GDP binary complex. In order for eIF2 to recycle and catalyze another round of initiation, the GDP bound to eIF2 must exchange with GTP by way of a reaction catalyzed by eIF2B. EIF2S1/eIF2-alpha is a key component of the integrated stress response (ISR), required for adaptation to various stress: phosphorylation by metabolic-stress sensing protein kinases (EIF2AK1/HRI, EIF2AK2/PKR, EIF2AK3/PERK and EIF2AK4/GCN2) in response to stress converts EIF2S1/eIF2-alpha in a global protein synthesis inhibitor, leading to a attenuation of cap-dependent translation, while concomitantly initiating the preferential translation of ISR-specific mRNAs, such as the transcriptional activators ATF4 and QRICH1, and hence allowing ATF4- and QRICH1-mediated reprogramming. EIF2S1/eIF2-alpha also acts as an activator of mitophagy in response to mitochondrial damage: phosphorylation by EIF2AK1/HRI promotes relocalization to the mitochondrial surface, thereby triggering PRKN-independent mitophagy. This chain is Eukaryotic translation initiation factor 2 subunit 1 (EIF2S1), found in Sus scrofa (Pig).